Reading from the N-terminus, the 532-residue chain is Calnexin homolog 2 (532 aa).

A signal peptide spans 1 to 25 (MRERIITFVSLLLVALLSFPSVSYC). Over 26–468 (DDQTILYESF…EKAETQPNLT (443 aa)) the chain is Lumenal. The Ca(2+) site is built by S34 and D65. C110 and C145 are oxidised to a cystine. 4 residues coordinate an alpha-D-glucoside: Y114, K116, Y136, and D143. The disordered stretch occupies residues 208–302 (NLLSAEDFEP…DEEDGEWEAP (95 aa)). A p domain (Extended arm) region spans residues 225–358 (IPDPEDKKPE…RDIPNPDYFE (134 aa)). A compositionally biased stretch (basic and acidic residues) spans 226-242 (PDPEDKKPEDWDERAKI). 5 consecutive repeat copies span residues 227–238 (DPEDKKPEDWDE), 244–255 (DPNAVKPDDWDE), 263–274 (DEEAEKPEGWLD), 282–293 (DPEASKPEDWDD), and 297–307 (GEWEAPKVSNT). 2 4 X approximate repeats regions span residues 227-293 (DPED…DWDD) and 297-354 (GEWE…IPNP). Composition is skewed to acidic residues over residues 252–283 (DWDE…VEDP) and 290–299 (DWDDEEDGEW). C309 and C315 form a disulfide bridge. Tandem repeats lie at residues 316–326 (GEWKRPMKRNP), 330–340 (GKWSSPLIDNP), and 344–354 (GIWKPRDIPNP). Residue E373 participates in an alpha-D-glucoside binding. D384 is a binding site for Ca(2+). N466 is a glycosylation site (N-linked (GlcNAc...) asparagine). The chain crosses the membrane as a helical span at residues 469–489 (IGVLISIVIVFLSLFFKLIFG). At 490–532 (GAKAKVEKKKPETAAETSTSEAKTEEKAEAVAAPRKRQTRRES) the chain is on the cytoplasmic side. The tract at residues 493-532 (AKVEKKKPETAAETSTSEAKTEEKAEAVAAPRKRQTRRES) is disordered. Positions 523 to 532 (PRKRQTRRES) are enriched in basic residues.

It belongs to the calreticulin family.

It localises to the endoplasmic reticulum membrane. Its function is as follows. Calcium-binding protein that interacts with newly synthesized monoglucosylated glycoproteins in the endoplasmic reticulum. It may act in assisting protein assembly and/or in the retention within the ER of unassembled protein subunits. It seems to play a major role in the quality control apparatus of the ER by the retention of incorrectly folded proteins. In Arabidopsis thaliana (Mouse-ear cress), this protein is Calnexin homolog 2.